Reading from the N-terminus, the 91-residue chain is Large ribosomal subunit protein eL37B (91 aa).

Residues C19, C22, C34, and C37 each coordinate Zn(2+). Residues C19–C37 form a C4-type zinc finger.

Belongs to the eukaryotic ribosomal protein eL37 family. In terms of assembly, component of the large ribosomal subunit (LSU). Mature yeast ribosomes consist of a small (40S) and a large (60S) subunit. The 40S small subunit contains 1 molecule of ribosomal RNA (18S rRNA) and at least 33 different proteins. The large 60S subunit contains 3 rRNA molecules (25S, 5.8S and 5S rRNA) and at least 46 different proteins. The cofactor is Zn(2+).

It is found in the cytoplasm. Its function is as follows. Component of the ribosome, a large ribonucleoprotein complex responsible for the synthesis of proteins in the cell. The small ribosomal subunit (SSU) binds messenger RNAs (mRNAs) and translates the encoded message by selecting cognate aminoacyl-transfer RNA (tRNA) molecules. The large subunit (LSU) contains the ribosomal catalytic site termed the peptidyl transferase center (PTC), which catalyzes the formation of peptide bonds, thereby polymerizing the amino acids delivered by tRNAs into a polypeptide chain. The nascent polypeptides leave the ribosome through a tunnel in the LSU and interact with protein factors that function in enzymatic processing, targeting, and the membrane insertion of nascent chains at the exit of the ribosomal tunnel. This is Large ribosomal subunit protein eL37B (rpl3702) from Schizosaccharomyces pombe (strain 972 / ATCC 24843) (Fission yeast).